Consider the following 112-residue polypeptide: uncharacterized protein (112 aa).

This is an uncharacterized protein from Saccharomyces cerevisiae (strain ATCC 204508 / S288c) (Baker's yeast).